A 55-amino-acid chain; its full sequence is MESPKCLYSRITVNTAFGTKFSHISFIILFKVFLFPRITISKKTKLVTLSNYLNK.

This is an uncharacterized protein from Homo sapiens (Human).